A 204-amino-acid chain; its full sequence is FlaA locus 22.9 kDa protein (204 aa).

A disordered region spans residues 115–140; the sequence is EKTAEDQKKSSEDHTEGSADSKASSE.

The chain is FlaA locus 22.9 kDa protein (ylxF) from Bacillus subtilis (strain 168).